A 360-amino-acid chain; its full sequence is Phenylalanine--tRNA ligase alpha subunit (360 aa).

Residue E260 coordinates Mg(2+).

Belongs to the class-II aminoacyl-tRNA synthetase family. Phe-tRNA synthetase alpha subunit type 1 subfamily. As to quaternary structure, tetramer of two alpha and two beta subunits. Mg(2+) serves as cofactor.

The protein localises to the cytoplasm. It catalyses the reaction tRNA(Phe) + L-phenylalanine + ATP = L-phenylalanyl-tRNA(Phe) + AMP + diphosphate + H(+). The protein is Phenylalanine--tRNA ligase alpha subunit of Bradyrhizobium sp. (strain BTAi1 / ATCC BAA-1182).